A 242-amino-acid polypeptide reads, in one-letter code: Probable 2-phosphosulfolactate phosphatase (242 aa).

This sequence belongs to the ComB family. Requires Mg(2+) as cofactor.

It catalyses the reaction (2R)-O-phospho-3-sulfolactate + H2O = (2R)-3-sulfolactate + phosphate. The chain is Probable 2-phosphosulfolactate phosphatase from Synechococcus sp. (strain JA-2-3B'a(2-13)) (Cyanobacteria bacterium Yellowstone B-Prime).